The following is a 92-amino-acid chain: Small ribosomal subunit protein uS19 (92 aa).

The protein belongs to the universal ribosomal protein uS19 family.

Functionally, protein S19 forms a complex with S13 that binds strongly to the 16S ribosomal RNA. The sequence is that of Small ribosomal subunit protein uS19 from Rickettsia typhi (strain ATCC VR-144 / Wilmington).